A 58-amino-acid polypeptide reads, in one-letter code: uncharacterized protein (58 aa).

The protein localises to the plastid. Its subcellular location is the chloroplast. This is an uncharacterized protein from Porphyra purpurea (Red seaweed).